The following is a 500-amino-acid chain: Neuronal pentraxin receptor (500 aa).

The Cytoplasmic segment spans residues M1–K2. Residues F3–I23 traverse the membrane as a helical; Signal-anchor for type II membrane protein segment. The Extracellular segment spans residues A24–A500. N-linked (GlcNAc...) asparagine glycosylation is present at N42. A compositionally biased stretch (low complexity) spans N42 to H63. Disordered regions lie at residues N42–S81 and E162–P183. N216 is a glycosylation site (N-linked (GlcNAc...) asparagine). The 203-residue stretch at D292–C494 folds into the Pentraxin (PTX) domain. C322 and C383 are oxidised to a cystine. Ca(2+) contacts are provided by N347, E425, Q426, D427, and Q437. N-linked (GlcNAc...) asparagine glycosylation occurs at N463.

As to quaternary structure, heteropentamer with NPTX1 and/or NPTX2. Also binds taipoxin-associated calcium-binding protein 49 (TCBP49/RCN2). Interacts with KLHL2. Requires Ca(2+) as cofactor. Ubiquitinated by a cullin-RING-based BCR (BTB-CUL3-RBX1) E3 ubiquitin-protein ligase complex containing KLHL2.

The protein localises to the membrane. May be involved in mediating uptake of synaptic material during synapse remodeling or in mediating the synaptic clustering of AMPA glutamate receptors at a subset of excitatory synapses. This Homo sapiens (Human) protein is Neuronal pentraxin receptor (NPTXR).